The sequence spans 231 residues: Orotidine 5'-phosphate decarboxylase (231 aa).

Residues aspartate 11, lysine 33, 60 to 69, threonine 119, arginine 180, glutamine 189, glycine 209, and arginine 210 contribute to the substrate site; that span reads DLKFHDIPNT. Lysine 62 functions as the Proton donor in the catalytic mechanism.

Belongs to the OMP decarboxylase family. Type 1 subfamily. In terms of assembly, homodimer.

The catalysed reaction is orotidine 5'-phosphate + H(+) = UMP + CO2. It participates in pyrimidine metabolism; UMP biosynthesis via de novo pathway; UMP from orotate: step 2/2. In terms of biological role, catalyzes the decarboxylation of orotidine 5'-monophosphate (OMP) to uridine 5'-monophosphate (UMP). This Idiomarina loihiensis (strain ATCC BAA-735 / DSM 15497 / L2-TR) protein is Orotidine 5'-phosphate decarboxylase.